Reading from the N-terminus, the 234-residue chain is Sperm flagellar protein 1 (234 aa).

The Calponin-homology (CH) domain occupies 7–112; that stretch reads EEALHQLYLW…VLIPLRQRLE (106 aa). Residues 181–234 are essential for homodimerization and microtubule bundling activity; it reads VLQIAEKEQELLASQETVQVLQMKVKRLEHLLQLKNVRIDDLSRRLQQAERKQR.

Homodimer. Interacts with actin, TJP1, CGN and CDH1. Expressed predominantly in the seminiferous epithelium of adult testis. Expressed in pillar cells of the organ of Corti (at protein level). Expressed in brain, kidney, lung and testis. Highly expressed in the trachea, lung and oviduct.

It is found in the cytoplasm. It localises to the cell projection. The protein resides in the cilium. The protein localises to the flagellum. Its subcellular location is the cytoskeleton. It is found in the cilium axoneme. It localises to the apical cell membrane. The protein resides in the basolateral cell membrane. The protein localises to the stress fiber. Its subcellular location is the microvillus. It is found in the lamellipodium. It localises to the filopodium. Functionally, microtubule-associated protein that promotes microtubule bundling and stabilizes microtubules against depolymerization in response to cold shock. Microtubule-associated protein involved in the stabilization of microtubules along the axis of migration during radial intercalation. Promotes the establishment and stabilization of an axis of microtubules required for the active migration of cells into the outer epithelium. Essential for ciliary central apparatus formation which requires both its microtubule-binding and bundling activities and for ciliary localization of HYDIN and SPAG6 in ependymal cilia. Binds actin in intestinal epithelial cells (IECs), essential for IECs survival and contributes to formation of filopodia and lamellipodia in migrating IECs. Regulates planar cell polarity signaling pathway and asymmetric microtubule accumulation in ciliated epithelia. This is Sperm flagellar protein 1 (Spef1) from Mus musculus (Mouse).